Here is a 353-residue protein sequence, read N- to C-terminus: Protein pelota homolog (353 aa).

Belongs to the eukaryotic release factor 1 family. Pelota subfamily. Monomer. It depends on a divalent metal cation as a cofactor.

It localises to the cytoplasm. Its function is as follows. May function in recognizing stalled ribosomes, interact with stem-loop structures in stalled mRNA molecules, and effect endonucleolytic cleavage of the mRNA. May play a role in the release non-functional ribosomes and degradation of damaged mRNAs. Has endoribonuclease activity. This is Protein pelota homolog from Methanobrevibacter smithii (strain ATCC 35061 / DSM 861 / OCM 144 / PS).